A 160-amino-acid polypeptide reads, in one-letter code: Variant surface antigen C (160 aa).

A signal peptide spans Met-1–Ser-29. Residue Cys-30 is the site of N-palmitoyl cysteine attachment. Cys-30 carries S-diacylglycerol cysteine lipidation. Positions Gln-32 to Thr-160 are disordered. Low complexity-rich tracts occupy residues Ser-38–Thr-54 and Ser-62–Thr-87. 6 consecutive repeat copies span residues Glu-86–Gln-97, Glu-98–Gln-109, Glu-110–Gln-121, Glu-122–Gln-133, Glu-134–Gln-145, and Glu-146–Gln-157. The tract at residues Glu-86 to Gln-157 is 6 X 12 AA tandem repeats. The segment covering Glu-93 to Thr-160 has biased composition (polar residues).

The protein resides in the cell membrane. Its function is as follows. Responsible for the antigenic diversity for host adaptation. This is Variant surface antigen C (vlpC) from Mesomycoplasma hyorhinis (Mycoplasma hyorhinis).